A 220-amino-acid polypeptide reads, in one-letter code: Probable L-serine dehydratase, beta chain (220 aa).

The ACT domain maps to 148-220 (AILVVHNDKF…NIIQVTKIAD (73 aa)).

The protein belongs to the iron-sulfur dependent L-serine dehydratase family. Heterodimer of an alpha chain and a beta chain. It depends on [4Fe-4S] cluster as a cofactor.

It carries out the reaction L-serine = pyruvate + NH4(+). Its pathway is carbohydrate biosynthesis; gluconeogenesis. The sequence is that of Probable L-serine dehydratase, beta chain (sdaAB) from Bacillus subtilis (strain 168).